Reading from the N-terminus, the 493-residue chain is UDP-N-acetylmuramoyl-L-alanyl-D-glutamate--2,6-diaminopimelate ligase (493 aa).

The UDP-N-acetyl-alpha-D-muramoyl-L-alanyl-D-glutamate site is built by Leu-30 and Ser-32. Residue 117 to 123 (GTNGKTT) coordinates ATP. UDP-N-acetyl-alpha-D-muramoyl-L-alanyl-D-glutamate contacts are provided by residues Asn-158, 159–160 (TT), Ser-186, Gln-192, and Arg-194. At Lys-226 the chain carries N6-carboxylysine. Residues Arg-388, 412–415 (DNPR), Gly-463, and Glu-467 each bind meso-2,6-diaminopimelate. The Meso-diaminopimelate recognition motif signature appears at 412-415 (DNPR).

This sequence belongs to the MurCDEF family. MurE subfamily. It depends on Mg(2+) as a cofactor. Post-translationally, carboxylation is probably crucial for Mg(2+) binding and, consequently, for the gamma-phosphate positioning of ATP.

The protein resides in the cytoplasm. The enzyme catalyses UDP-N-acetyl-alpha-D-muramoyl-L-alanyl-D-glutamate + meso-2,6-diaminopimelate + ATP = UDP-N-acetyl-alpha-D-muramoyl-L-alanyl-gamma-D-glutamyl-meso-2,6-diaminopimelate + ADP + phosphate + H(+). It participates in cell wall biogenesis; peptidoglycan biosynthesis. In terms of biological role, catalyzes the addition of meso-diaminopimelic acid to the nucleotide precursor UDP-N-acetylmuramoyl-L-alanyl-D-glutamate (UMAG) in the biosynthesis of bacterial cell-wall peptidoglycan. The sequence is that of UDP-N-acetylmuramoyl-L-alanyl-D-glutamate--2,6-diaminopimelate ligase from Vibrio parahaemolyticus serotype O3:K6 (strain RIMD 2210633).